A 288-amino-acid chain; its full sequence is Acetyl-coenzyme A carboxylase carboxyl transferase subunit beta (288 aa).

The CoA carboxyltransferase N-terminal domain maps to 30–288 (IMTKCPKCKK…KLHQEVKKDA (259 aa)). Positions 34, 37, 53, and 56 each coordinate Zn(2+). A C4-type zinc finger spans residues 34–56 (CPKCKKIMYTKELNENLNVCFNC).

This sequence belongs to the AccD/PCCB family. In terms of assembly, acetyl-CoA carboxylase is a heterohexamer composed of biotin carboxyl carrier protein (AccB), biotin carboxylase (AccC) and two subunits each of ACCase subunit alpha (AccA) and ACCase subunit beta (AccD). Requires Zn(2+) as cofactor.

Its subcellular location is the cytoplasm. It carries out the reaction N(6)-carboxybiotinyl-L-lysyl-[protein] + acetyl-CoA = N(6)-biotinyl-L-lysyl-[protein] + malonyl-CoA. The protein operates within lipid metabolism; malonyl-CoA biosynthesis; malonyl-CoA from acetyl-CoA: step 1/1. Functionally, component of the acetyl coenzyme A carboxylase (ACC) complex. Biotin carboxylase (BC) catalyzes the carboxylation of biotin on its carrier protein (BCCP) and then the CO(2) group is transferred by the transcarboxylase to acetyl-CoA to form malonyl-CoA. This is Acetyl-coenzyme A carboxylase carboxyl transferase subunit beta from Staphylococcus haemolyticus (strain JCSC1435).